The following is a 233-amino-acid chain: uncharacterized protein (233 aa).

It belongs to the asfivirus H233R family.

This is an uncharacterized protein from African swine fever virus (isolate Tick/South Africa/Pretoriuskop Pr4/1996) (ASFV).